The sequence spans 1496 residues: MAEERPPRLVDYFVVAGLAGNGAPIPEETWVPEPSGPLRPPRPAEPITDVAVIARALGEEVPQGYTCIQASAGGHPLELSAGLLGGTQPVICYRRGRDKPPLVELGVLYEGKERPKPGFQVLDTTPYSHSANLAPPGPGHPRTYLTYRRAAEGAGLHALGITDLCLVLPSKGEGTPHTYCRLPRNLNPGMWGPAVYLCYKVGLAKANTLVYEAELLGRYPEEDNEAFPLPESVPVFCLPMGATIECWPAQTKYPVPVFSTFVLTGAAGDKVYGAALQFYEAFPRARLSERQARALGLLSAVERGRALGGRAVRSRRAIAVLSRWPAFPAFRAFLTFLYRYSVSGPHRLPLEAHISHFIHNVPFPSPQRPRILVQMSPYDNLLLCQPVSSPLPLSGASFLQLLQSLGPELAITLLLAVLTEHKLLVHSLRPDLLTSVCEALVSMIFPLHWQCPYIPLCPLVLADVLSAPVPFIVGIHSSYFDLHDPPADVICVDLDTNTLFQTEEKKLLSPRTLPRRPYKVLLATLTNLYQQLDQTYTGPEEEASLEFLLTDYEAVCGRRARLEREVQGAFLRFMACLLKGYRVFLRPLTQAPSEGARDVDNLFFLQGFLKSRERSSHKLYSQLLHTQMFSQFIEECSFGSARHAALEFFDSCVEKVHPEQEKPEPTPLVELEELSGSELTVFITPPEEPALPEGSESTPQYCYDGFPELRAELFESLQEQPGALPVPGPSRSAPSSPAPRRTKQEMKVAQRMAQKSAAVPELWARCLLGHCYGLWFLCLPAYVRSAPSRVQALHTAYHVLRQMESGKVVLPDEVCYRVLMQLCSHYGQPVLSVRVMLEMRQAGIVPNTITYGYYNKAVLESKWPSGTPGGRLRWAKLRNVVLGAAQFRQPLRERQQQQQQQQQQQQQQQQEQVSAHQEAGSSQAEPYLERPSPTRPLQRQTTWAGRSLRDPASPPGRLVKSGSLGSARGAQPTVEAGVAHMIEALGVLEPRGSPVPWHDGSLSDLSLTGEEPLPGGSPGGSGSALSAQSTEALEGLSGRGPKAGGRQDEAGTPRRGLGARLQQLLTPSRHSPASRIPPPELPPDLPPPARRSPMDSLLHPRERPGSTASESSASLGSEWDLSESSLSNLSLRRSSERLSDTPGSFQSPSLEILLSSCSLCRACDSLVYDEEIMAGWAPDDSNLNTTCPFCACPFVPLLSVQTLDSRPSVPSPKSAGASGSKDAPVPGGPGPVLSDRRLCLALDEPQLCNGHMGGASRRVESGAWAYLSPLVLRKELESLVENEGSEVLALPELPSAHPIIFWNLLWYFQRLRLPSILPGLVLASCDGPSHSQAPSPWLTPDPASVQVRLLWDVLTPDPNSCPPLYVLWRVHSQIPQRVVWPGPVPASLSLALLESVLRHVGLNEVHKAVGLLLETLGPPPTGLHLQRGIYREILFLTMAALGKDHVDIVAFDKKYKSAFNKLASSMGKEELRHRRAQMPTPKAIDCRKCFGAPPEC.

Positions 44-203 (AEPITDVAVI…AVYLCYKVGL (160 aa)) constitute an MABP domain. Positions 195-369 (VYLCYKVGLA…NVPFPSPQRP (175 aa)) constitute a uDENN domain. The cDENN domain maps to 390 to 526 (PLPLSGASFL…PYKVLLATLT (137 aa)). The 117-residue stretch at 528-644 (LYQQLDQTYT…ECSFGSARHA (117 aa)) folds into the dDENN domain. A disordered region spans residues 720–744 (QPGALPVPGPSRSAPSSPAPRRTKQ). The segment covering 729 to 739 (PSRSAPSSPAP) has biased composition (low complexity). 2 PPR repeats span residues 775 to 811 (WFLC…VVLP) and 812 to 846 (DEVC…GIVP). Disordered regions lie at residues 891-970 (LRER…ARGA), 995-1055 (VPWH…TPRR), 1067-1119 (PSRH…GSEW), and 1205-1227 (SRPS…PVPG). Low complexity predominate over residues 896–912 (QQQQQQQQQQQQQQQEQ). Composition is skewed to polar residues over residues 913-924 (VSAHQEAGSSQA) and 935-944 (RPLQRQTTWA). Residue Ser-953 is modified to Phosphoserine. Residues 1075–1090 (RIPPPELPPDLPPPAR) show a composition bias toward pro residues. Position 1092 is a phosphoserine (Ser-1092). Residues 1105–1119 (GSTASESSASLGSEW) show a composition bias toward low complexity.

The protein localises to the golgi apparatus. Its function is as follows. Guanine nucleotide exchange factor (GEF) which may activate RAB10. Promotes the exchange of GDP to GTP, converting inactive GDP-bound Rab proteins into their active GTP-bound form. The chain is DENN domain-containing protein 4B (DENND4B) from Homo sapiens (Human).